Reading from the N-terminus, the 586-residue chain is Arginine--tRNA ligase (586 aa).

A 'HIGH' region motif is present at residues 131–141 (ANPTGPLHVGH).

Belongs to the class-I aminoacyl-tRNA synthetase family. Monomer.

The protein resides in the cytoplasm. The catalysed reaction is tRNA(Arg) + L-arginine + ATP = L-arginyl-tRNA(Arg) + AMP + diphosphate. This Nitrosomonas europaea (strain ATCC 19718 / CIP 103999 / KCTC 2705 / NBRC 14298) protein is Arginine--tRNA ligase.